We begin with the raw amino-acid sequence, 333 residues long: Transcription factor MYB36 (333 aa).

HTH myb-type domains lie at 9–62 (KANV…LNYL) and 63–117 (RPNI…KKKL). 2 DNA-binding regions (H-T-H motif) span residues 38-62 (WIAL…LNYL) and 90-113 (WSII…NTKL). The disordered stretch occupies residues 119–150 (GRQKQMNRQDSITDSTENNLSNNNNNKSPQNL). The span at 122-135 (KQMNRQDSITDSTE) shows a compositional bias: polar residues. Low complexity predominate over residues 136-150 (NNLSNNNNNKSPQNL).

Expressed in leaves, roots (endodermis-specific) and seedlings.

The protein localises to the nucleus. Transcription factors that activates genes required for endodermal differentiation but represses genes involved in proliferative divisions, thus regulating the transition from proliferation to differentiation in root endodermis. Required for Casparian strip formation by positively regulating the expression of the Casparian strip genes CASP1, PER64 and ESB1 and other endodermis-specific genes, thus triggering correct localized lignin biosynthesis in root endodermis and subsequently regulating global ion homeostasis. This Arabidopsis thaliana (Mouse-ear cress) protein is Transcription factor MYB36.